The following is a 197-amino-acid chain: Pyridoxal 5'-phosphate synthase subunit PdxT (197 aa).

Position 53–55 (Gly-53–Ser-55) interacts with L-glutamine. The Nucleophile role is filled by Cys-85. L-glutamine is bound by residues Arg-114 and Ile-142 to Arg-143. Catalysis depends on charge relay system residues His-179 and Glu-181.

Belongs to the glutaminase PdxT/SNO family. In the presence of PdxS, forms a dodecamer of heterodimers. Only shows activity in the heterodimer.

It catalyses the reaction aldehydo-D-ribose 5-phosphate + D-glyceraldehyde 3-phosphate + L-glutamine = pyridoxal 5'-phosphate + L-glutamate + phosphate + 3 H2O + H(+). The enzyme catalyses L-glutamine + H2O = L-glutamate + NH4(+). The protein operates within cofactor biosynthesis; pyridoxal 5'-phosphate biosynthesis. Catalyzes the hydrolysis of glutamine to glutamate and ammonia as part of the biosynthesis of pyridoxal 5'-phosphate. The resulting ammonia molecule is channeled to the active site of PdxS. The chain is Pyridoxal 5'-phosphate synthase subunit PdxT from Pyrococcus furiosus (strain ATCC 43587 / DSM 3638 / JCM 8422 / Vc1).